Here is a 270-residue protein sequence, read N- to C-terminus: tRNA pseudouridine synthase A (270 aa).

Residue aspartate 60 is the Nucleophile of the active site. Residue tyrosine 118 coordinates substrate.

Belongs to the tRNA pseudouridine synthase TruA family. Homodimer.

It catalyses the reaction uridine(38/39/40) in tRNA = pseudouridine(38/39/40) in tRNA. Functionally, formation of pseudouridine at positions 38, 39 and 40 in the anticodon stem and loop of transfer RNAs. This Cronobacter sakazakii (strain ATCC BAA-894) (Enterobacter sakazakii) protein is tRNA pseudouridine synthase A.